A 640-amino-acid polypeptide reads, in one-letter code: ATP-dependent DNA helicase YoaA (640 aa).

A Helicase ATP-binding domain is found at 16 to 278; it reads ELSQNIKGFR…KDMQQLGTTS (263 aa). 51–58 contributes to the ATP binding site; sequence AGTGTGKT. C114 serves as a coordination point for [4Fe-4S] cluster. Residues 125–128 carry the DEAH box motif; the sequence is GVLG. 3 residues coordinate [4Fe-4S] cluster: C174, C179, and C185. A DEAH box motif is present at residues 231–234; it reads DEAH. The region spanning 458 to 634 is the Helicase C-terminal domain; it reads SLGEILLPVI…SRTRDLNKVI (177 aa).

This sequence belongs to the helicase family. DinG subfamily. [4Fe-4S] cluster serves as cofactor.

It catalyses the reaction Couples ATP hydrolysis with the unwinding of duplex DNA at the replication fork by translocating in the 5'-3' direction. This creates two antiparallel DNA single strands (ssDNA). The leading ssDNA polymer is the template for DNA polymerase III holoenzyme which synthesizes a continuous strand.. The catalysed reaction is ATP + H2O = ADP + phosphate + H(+). Its function is as follows. Probably a 5'-3' DNA helicase. The sequence is that of ATP-dependent DNA helicase YoaA from Haemophilus influenzae (strain ATCC 51907 / DSM 11121 / KW20 / Rd).